Reading from the N-terminus, the 200-residue chain is UPF0316 protein Mhun_0543 (200 aa).

3 helical membrane-spanning segments follow: residues 3–23 (VGFL…IFLA), 44–64 (FIAP…IGQV), and 71–91 (PICY…GMEL).

The protein belongs to the UPF0316 family.

It is found in the cell membrane. The chain is UPF0316 protein Mhun_0543 from Methanospirillum hungatei JF-1 (strain ATCC 27890 / DSM 864 / NBRC 100397 / JF-1).